The primary structure comprises 392 residues: Extracellular metalloproteinase 4 (392 aa).

A propeptide spanning residues 1–9 (VHSVVDYVS) is cleaved from the precursor. Asn-176 carries an N-linked (GlcNAc...) asparagine glycan. Position 193 (His-193) interacts with Zn(2+). Residue Glu-194 is part of the active site. Residue His-197 coordinates Zn(2+). N-linked (GlcNAc...) asparagine glycans are attached at residues Asn-359 and Asn-385.

Belongs to the peptidase M36 family. Requires Zn(2+) as cofactor.

It is found in the secreted. Functionally, secreted metalloproteinase probably acting as a virulence factor. This is Extracellular metalloproteinase 4 (MEP4) from Trichophyton soudanense.